The following is a 635-amino-acid chain: Isethionate TRAP transporter permease protein DctMQ (635 aa).

16 helical membrane passes run 38–58, 75–95, 117–137, 154–174, 192–212, 217–237, 266–286, 299–319, 350–370, 379–399, 431–451, 453–473, 481–501, 526–546, 572–592, and 609–629; these read KPFL…QTLY, TEEM…PVAI, ISWI…LWQS, LQLP…LMAV, TVIG…ADYI, VLFG…IGLG, FPIM…AGGL, GALP…FAAI, AIVA…PFVV, IGKL…ALMA, WALM…MTPT, AAAL…RELS, VVEA…ATIF, IAIL…MEAL, IIMV…VNLF, and VLPL…VPAI.

In the N-terminal section; belongs to the TRAP transporter small permease family. This sequence in the C-terminal section; belongs to the TRAP transporter large permease family. As to quaternary structure, the complex comprises the periplasmic solute receptor protein DctP, and the fused transmembrane protein DctMQ.

The protein resides in the cell inner membrane. The protein operates within organosulfur degradation; alkanesulfonate degradation. Functionally, part of the tripartite ATP-independent periplasmic (TRAP) transport system DctPQM involved in the uptake of isethionate (2-hydroxyethanesulfonate), which is then catabolized by enzymes encoded by adjacent genes in the locus. Thereby is involved in an anaerobic respiration pathway that converts the sulfonate isethionate to ammonia, acetate and sulfide. This is Isethionate TRAP transporter permease protein DctMQ from Oleidesulfovibrio alaskensis (strain ATCC BAA-1058 / DSM 17464 / G20) (Desulfovibrio alaskensis).